Here is a 368-residue protein sequence, read N- to C-terminus: 3-dehydroquinate synthase (368 aa).

NAD(+) contacts are provided by residues 71 to 76 (DGEAFK), 105 to 109 (GVVGD), 129 to 130 (TT), Lys-142, Lys-151, and 169 to 172 (TLRT). Zn(2+) is bound by residues Glu-184, His-247, and His-264.

This sequence belongs to the sugar phosphate cyclases superfamily. Dehydroquinate synthase family. It depends on Co(2+) as a cofactor. Zn(2+) serves as cofactor. The cofactor is NAD(+).

It is found in the cytoplasm. It catalyses the reaction 7-phospho-2-dehydro-3-deoxy-D-arabino-heptonate = 3-dehydroquinate + phosphate. Its pathway is metabolic intermediate biosynthesis; chorismate biosynthesis; chorismate from D-erythrose 4-phosphate and phosphoenolpyruvate: step 2/7. Catalyzes the conversion of 3-deoxy-D-arabino-heptulosonate 7-phosphate (DAHP) to dehydroquinate (DHQ). The sequence is that of 3-dehydroquinate synthase from Cupriavidus taiwanensis (strain DSM 17343 / BCRC 17206 / CCUG 44338 / CIP 107171 / LMG 19424 / R1) (Ralstonia taiwanensis (strain LMG 19424)).